The following is a 430-amino-acid chain: Aspartate aminotransferase, mitochondrial (430 aa).

Residues 1–29 (MALLHSSRILSGMAAAFHPGLAAAASARA) constitute a mitochondrion transit peptide. The residue at position 48 (T48) is a Phosphothreonine. K59 carries the N6-acetyllysine modification. G65 lines the substrate pocket. An N6-acetyllysine; alternate modification is found at K73. Position 73 is an N6-succinyllysine; alternate (K73). K82 is modified (N6-acetyllysine). K90 is modified (N6-acetyllysine; alternate). The residue at position 90 (K90) is an N6-succinyllysine; alternate. Residue Y96 is modified to 3'-nitrotyrosine; alternate. Y96 is modified (phosphotyrosine; alternate). An N6-acetyllysine; alternate mark is found at K107 and K122. N6-succinyllysine; alternate occurs at positions 107 and 122. Position 143 is a phosphoserine (S143). Residue K159 is modified to N6-acetyllysine; alternate. K159 carries the N6-succinyllysine; alternate modification. Residue W162 coordinates substrate. The residue at position 185 (K185) is an N6-acetyllysine; alternate. Residue K185 is modified to N6-succinyllysine; alternate. N215 is a binding site for substrate. At K227 the chain carries N6-succinyllysine. K234 carries the post-translational modification N6-acetyllysine. K279 and K296 each carry N6-acetyllysine; alternate. An N6-(pyridoxal phosphate)lysine; alternate modification is found at K279. N6-succinyllysine; alternate is present on K296. Residue K302 is modified to N6-acetyllysine. Position 309 is an N6-acetyllysine; alternate (K309). K309 bears the N6-succinyllysine; alternate mark. At R313 the chain carries Asymmetric dimethylarginine. An N6-acetyllysine; alternate modification is found at K338. K338 carries the N6-succinyllysine; alternate modification. K345 carries the N6-acetyllysine modification. N6-acetyllysine; alternate is present on K363. K363 carries the N6-succinyllysine; alternate modification. N6-acetyllysine occurs at positions 364 and 387. Residues K396 and K404 each carry the N6-acetyllysine; alternate modification. N6-succinyllysine; alternate is present on residues K396 and K404. Position 407 (R407) interacts with substrate.

It belongs to the class-I pyridoxal-phosphate-dependent aminotransferase family. As to quaternary structure, homodimer. It depends on pyridoxal 5'-phosphate as a cofactor. Post-translationally, acetylation of Lys-296, Lys-345 and Lys-363 is observed in liver mitochondria from fasted mice but not from fed mice. In terms of tissue distribution, detected in brain (at protein level).

It is found in the mitochondrion matrix. Its subcellular location is the cell membrane. The catalysed reaction is L-aspartate + 2-oxoglutarate = oxaloacetate + L-glutamate. It catalyses the reaction L-kynurenine + 2-oxoglutarate = kynurenate + L-glutamate + H2O. Catalyzes the irreversible transamination of the L-tryptophan metabolite L-kynurenine to form kynurenic acid (KA). As a member of the malate-aspartate shuttle, it has a key role in the intracellular NAD(H) redox balance. Is important for metabolite exchange between mitochondria and cytosol, and for amino acid metabolism. Facilitates cellular uptake of long-chain free fatty acids. This is Aspartate aminotransferase, mitochondrial (Got2) from Mus musculus (Mouse).